Here is a 322-residue protein sequence, read N- to C-terminus: Undecaprenyl-phosphate 4-deoxy-4-formamido-L-arabinose transferase (322 aa).

Topologically, residues 1 to 235 (MFEIHPVKKV…TCLTTTPLRM (235 aa)) are cytoplasmic. Residues 236-256 (LSLLGSIIAIGGFSIAVLLVI) form a helical membrane-spanning segment. Residues 257 to 269 (LRLTFGPQWAAEG) are Periplasmic-facing. A helical transmembrane segment spans residues 270–290 (VFMLFAVLFTFIGAQFIGMGL). Topologically, residues 291–322 (LGEYIGRIYTDVRARPRYFVQQVIRPSSKENE) are cytoplasmic.

The protein belongs to the glycosyltransferase 2 family.

The protein resides in the cell inner membrane. It catalyses the reaction UDP-4-deoxy-4-formamido-beta-L-arabinose + di-trans,octa-cis-undecaprenyl phosphate = 4-deoxy-4-formamido-alpha-L-arabinopyranosyl di-trans,octa-cis-undecaprenyl phosphate + UDP. It participates in glycolipid biosynthesis; 4-amino-4-deoxy-alpha-L-arabinose undecaprenyl phosphate biosynthesis; 4-amino-4-deoxy-alpha-L-arabinose undecaprenyl phosphate from UDP-4-deoxy-4-formamido-beta-L-arabinose and undecaprenyl phosphate: step 1/2. Its pathway is bacterial outer membrane biogenesis; lipopolysaccharide biosynthesis. Catalyzes the transfer of 4-deoxy-4-formamido-L-arabinose from UDP to undecaprenyl phosphate. The modified arabinose is attached to lipid A and is required for resistance to polymyxin and cationic antimicrobial peptides. This chain is Undecaprenyl-phosphate 4-deoxy-4-formamido-L-arabinose transferase, found in Escherichia coli O17:K52:H18 (strain UMN026 / ExPEC).